Consider the following 67-residue polypeptide: ATP synthase F(0) complex subunit 8 (67 aa).

The chain crosses the membrane as a helical span at residues 8–24 (PWFITILSMIITLFILF). Residue Lys-54 is modified to N6-acetyllysine; alternate. Lys-54 is modified (N6-succinyllysine; alternate). Lys-57 bears the N6-acetyllysine mark.

Belongs to the ATPase protein 8 family. In terms of assembly, component of the ATP synthase complex composed at least of ATP5F1A/subunit alpha, ATP5F1B/subunit beta, ATP5MC1/subunit c (homooctomer), MT-ATP6/subunit a, MT-ATP8/subunit 8, ATP5ME/subunit e, ATP5MF/subunit f, ATP5MG/subunit g, ATP5MK/subunit k, ATP5MJ/subunit j, ATP5F1C/subunit gamma, ATP5F1D/subunit delta, ATP5F1E/subunit epsilon, ATP5PF/subunit F6, ATP5PB/subunit b, ATP5PD/subunit d, ATP5PO/subunit OSCP. ATP synthase complex consists of a soluble F(1) head domain (subunits alpha(3) and beta(3)) - the catalytic core - and a membrane F(0) domain - the membrane proton channel (subunits c, a, 8, e, f, g, k and j). These two domains are linked by a central stalk (subunits gamma, delta, and epsilon) rotating inside the F1 region and a stationary peripheral stalk (subunits F6, b, d, and OSCP). Interacts with PRICKLE3.

It is found in the mitochondrion membrane. Its function is as follows. Subunit 8, of the mitochondrial membrane ATP synthase complex (F(1)F(0) ATP synthase or Complex V) that produces ATP from ADP in the presence of a proton gradient across the membrane which is generated by electron transport complexes of the respiratory chain. ATP synthase complex consist of a soluble F(1) head domain - the catalytic core - and a membrane F(1) domain - the membrane proton channel. These two domains are linked by a central stalk rotating inside the F(1) region and a stationary peripheral stalk. During catalysis, ATP synthesis in the catalytic domain of F(1) is coupled via a rotary mechanism of the central stalk subunits to proton translocation. In vivo, can only synthesize ATP although its ATP hydrolase activity can be activated artificially in vitro. Part of the complex F(0) domain. The polypeptide is ATP synthase F(0) complex subunit 8 (Orycteropus afer (Aardvark)).